A 280-amino-acid chain; its full sequence is Putative pyruvate, phosphate dikinase regulatory protein (280 aa).

Residue 156–163 (GVSRTSKT) coordinates ADP.

This sequence belongs to the pyruvate, phosphate/water dikinase regulatory protein family. PDRP subfamily.

It carries out the reaction N(tele)-phospho-L-histidyl/L-threonyl-[pyruvate, phosphate dikinase] + ADP = N(tele)-phospho-L-histidyl/O-phospho-L-threonyl-[pyruvate, phosphate dikinase] + AMP + H(+). It catalyses the reaction N(tele)-phospho-L-histidyl/O-phospho-L-threonyl-[pyruvate, phosphate dikinase] + phosphate + H(+) = N(tele)-phospho-L-histidyl/L-threonyl-[pyruvate, phosphate dikinase] + diphosphate. Functionally, bifunctional serine/threonine kinase and phosphorylase involved in the regulation of the pyruvate, phosphate dikinase (PPDK) by catalyzing its phosphorylation/dephosphorylation. In Hyphomonas neptunium (strain ATCC 15444), this protein is Putative pyruvate, phosphate dikinase regulatory protein.